The sequence spans 1347 residues: Protocadherin-11 X-linked (1347 aa).

A signal peptide spans M1–A23. The Extracellular segment spans residues Q24–K812. Cadherin domains follow at residues K26 to F139, P140 to F249, K250 to I355, N362 to F466, T467 to F570, T571 to F673, and P677 to T795. N-linked (GlcNAc...) asparagine glycans are attached at residues N27, N48, and N54. N344 carries N-linked (GlcNAc...) asparagine glycosylation. An N-linked (GlcNAc...) asparagine glycan is attached at N553. An N-linked (GlcNAc...) asparagine glycan is attached at N773. Residues I813–V833 traverse the membrane as a helical segment. At V834–L1347 the chain is on the cytoplasmic side. 3 disordered regions span residues L1057–Q1091, R1097–F1116, and F1326–L1347.

In terms of tissue distribution, expressed strongly in fetal brain and brain (cortex, amygdala, thalamus, substantia nigra, hippocampus, caudate nucleus and corpus callosum). Expressed at low level in testis.

Its subcellular location is the cell membrane. Potential calcium-dependent cell-adhesion protein. This Homo sapiens (Human) protein is Protocadherin-11 X-linked (PCDH11X).